Consider the following 367-residue polypeptide: Protein-glutamate methylesterase/protein-glutamine glutaminase (367 aa).

One can recognise a Response regulatory domain in the interval 6–123; sequence RVLVVDDSAF…SLGIKQLADE (118 aa). 4-aspartylphosphate is present on Asp-57. A CheB-type methylesterase domain is found at 165 to 361; it reads ISKKEIVVVI…DILLKKVNEY (197 aa). Residues Ser-177, His-204, and Asp-303 contribute to the active site.

The protein belongs to the CheB family. Post-translationally, phosphorylated by CheA. Phosphorylation of the N-terminal regulatory domain activates the methylesterase activity.

Its subcellular location is the cytoplasm. It catalyses the reaction [protein]-L-glutamate 5-O-methyl ester + H2O = L-glutamyl-[protein] + methanol + H(+). The enzyme catalyses L-glutaminyl-[protein] + H2O = L-glutamyl-[protein] + NH4(+). Functionally, involved in chemotaxis. Part of a chemotaxis signal transduction system that modulates chemotaxis in response to various stimuli. Catalyzes the demethylation of specific methylglutamate residues introduced into the chemoreceptors (methyl-accepting chemotaxis proteins or MCP) by CheR. Also mediates the irreversible deamidation of specific glutamine residues to glutamic acid. This is Protein-glutamate methylesterase/protein-glutamine glutaminase from Caldanaerobacter subterraneus subsp. tengcongensis (strain DSM 15242 / JCM 11007 / NBRC 100824 / MB4) (Thermoanaerobacter tengcongensis).